The sequence spans 348 residues: N-formyl peptide receptor 2 (348 aa).

The N-linked (GlcNAc...) asparagine glycan is linked to Asn1. Residues 1–24 lie on the Extracellular side of the membrane; it reads NFSTPLSEYEEVSYESAGYTVLQI. Residues 25–47 form a helical membrane-spanning segment; sequence LPLVVLGVTFVLGVLGNGLVIWV. Over 48–58 the chain is Cytoplasmic; that stretch reads AGFRMTRTVTT. Residues 59-80 traverse the membrane as a helical segment; that stretch reads ICYLNLALADFSFTATLPFLIV. Residues 81–97 lie on the Extracellular side of the membrane; it reads SMAMGEKWPFGWFLCKL. A disulfide bridge connects residues Cys95 and Cys173. Residues 98–118 traverse the membrane as a helical segment; sequence IHIVVDINLFGSVFLIGFIAL. Residues 119 to 137 lie on the Cytoplasmic side of the membrane; the sequence is DRCICVLHPVWAQNHRTVS. The helical transmembrane segment at 138 to 159 threads the bilayer; the sequence is LAMKVIVGPWILALVLTLPVFL. At 160 to 202 the chain is on the extracellular side; sequence FLTTVTIPNGDTYCTFNFASWGGTPEKRLKVAITMLTARGIIR. A helical membrane pass occupies residues 203–223; sequence FVIGFSMPMSIVATCYGLIAA. Over 224-239 the chain is Cytoplasmic; sequence KIHKKGMIKSSRPLRV. The helical transmembrane segment at 240–263 threads the bilayer; the sequence is LTAVVASFFICWFPFQLVALLSTV. Over 264-283 the chain is Extracellular; sequence WLKEILVDGKYKIINILVNP. The helical transmembrane segment at 284 to 303 threads the bilayer; that stretch reads TSSLAFFNSCLNPMLYVFVG. Topologically, residues 304–348 are cytoplasmic; it reads QDFRERLIHSLPTSLERALSEDSAPTNDTAASCASPPAETELQAM. Residues 322–348 form a disordered region; that stretch reads LSEDSAPTNDTAASCASPPAETELQAM. Polar residues predominate over residues 326-335; sequence SAPTNDTAAS.

It belongs to the G-protein coupled receptor 1 family. Interacts with APP; the interaction takes place at the cell surface and the complex is then rapidly internalized.

It localises to the cell membrane. Functionally, low affinity receptor for N-formyl-methionyl peptides, which are powerful neutrophil chemotactic factors. Binding of FMLP to the receptor causes activation of neutrophils. This response is mediated via a G-protein that activates a phosphatidylinositol-calcium second messenger system. Receptor for the chemokine-like protein FAM19A5, mediating FAM19A5-stimulated macrophage chemotaxis and the inhibitory effect on TNFSF11/RANKL-induced osteoclast differentiation. This is N-formyl peptide receptor 2 (FPR2) from Macaca mulatta (Rhesus macaque).